Here is a 560-residue protein sequence, read N- to C-terminus: Formate--tetrahydrofolate ligase (560 aa).

ATP is bound at residue 69–76; that stretch reads TPAGEGKS.

It belongs to the formate--tetrahydrofolate ligase family.

The catalysed reaction is (6S)-5,6,7,8-tetrahydrofolate + formate + ATP = (6R)-10-formyltetrahydrofolate + ADP + phosphate. Its pathway is one-carbon metabolism; tetrahydrofolate interconversion. The sequence is that of Formate--tetrahydrofolate ligase from Listeria monocytogenes serotype 4a (strain HCC23).